The sequence spans 93 residues: Small ribosomal subunit protein uS19 (93 aa).

It belongs to the universal ribosomal protein uS19 family.

Functionally, protein S19 forms a complex with S13 that binds strongly to the 16S ribosomal RNA. The protein is Small ribosomal subunit protein uS19 of Citrifermentans bemidjiense (strain ATCC BAA-1014 / DSM 16622 / JCM 12645 / Bem) (Geobacter bemidjiensis).